The following is a 514-amino-acid chain: Lysine--tRNA ligase (514 aa).

The Mg(2+) site is built by Glu422 and Glu429.

It belongs to the class-II aminoacyl-tRNA synthetase family. Homodimer. Mg(2+) serves as cofactor.

The protein localises to the cytoplasm. It catalyses the reaction tRNA(Lys) + L-lysine + ATP = L-lysyl-tRNA(Lys) + AMP + diphosphate. This is Lysine--tRNA ligase from Psychrobacter arcticus (strain DSM 17307 / VKM B-2377 / 273-4).